A 431-amino-acid chain; its full sequence is Enolase (431 aa).

Glutamine 167 lines the (2R)-2-phosphoglycerate pocket. Glutamate 209 (proton donor) is an active-site residue. Aspartate 246, glutamate 289, and aspartate 316 together coordinate Mg(2+). Lysine 341, arginine 370, serine 371, and lysine 392 together coordinate (2R)-2-phosphoglycerate. The Proton acceptor role is filled by lysine 341.

This sequence belongs to the enolase family. In terms of assembly, component of the RNA degradosome, a multiprotein complex involved in RNA processing and mRNA degradation. Mg(2+) serves as cofactor.

Its subcellular location is the cytoplasm. It localises to the secreted. It is found in the cell surface. It carries out the reaction (2R)-2-phosphoglycerate = phosphoenolpyruvate + H2O. It functions in the pathway carbohydrate degradation; glycolysis; pyruvate from D-glyceraldehyde 3-phosphate: step 4/5. In terms of biological role, catalyzes the reversible conversion of 2-phosphoglycerate (2-PG) into phosphoenolpyruvate (PEP). It is essential for the degradation of carbohydrates via glycolysis. This Shewanella putrefaciens (strain CN-32 / ATCC BAA-453) protein is Enolase.